Reading from the N-terminus, the 122-residue chain is Small ribosomal subunit protein uS13 (122 aa).

Residues 97-122 (PVRGQRTHTNAKTRKGRSKLPIAGKK) are disordered.

It belongs to the universal ribosomal protein uS13 family. As to quaternary structure, part of the 30S ribosomal subunit. Forms a loose heterodimer with protein S19. Forms two bridges to the 50S subunit in the 70S ribosome.

Its function is as follows. Located at the top of the head of the 30S subunit, it contacts several helices of the 16S rRNA. In the 70S ribosome it contacts the 23S rRNA (bridge B1a) and protein L5 of the 50S subunit (bridge B1b), connecting the 2 subunits; these bridges are implicated in subunit movement. Contacts the tRNAs in the A and P-sites. This chain is Small ribosomal subunit protein uS13, found in Wolbachia pipientis subsp. Culex pipiens (strain wPip).